Consider the following 78-residue polypeptide: Acyl carrier protein (78 aa).

The region spanning serine 2–methionine 77 is the Carrier domain. At serine 37 the chain carries O-(pantetheine 4'-phosphoryl)serine.

The protein belongs to the acyl carrier protein (ACP) family. In terms of processing, 4'-phosphopantetheine is transferred from CoA to a specific serine of apo-ACP by AcpS. This modification is essential for activity because fatty acids are bound in thioester linkage to the sulfhydryl of the prosthetic group.

The protein localises to the cytoplasm. It participates in lipid metabolism; fatty acid biosynthesis. Its function is as follows. Carrier of the growing fatty acid chain in fatty acid biosynthesis. This chain is Acyl carrier protein, found in Magnetococcus marinus (strain ATCC BAA-1437 / JCM 17883 / MC-1).